The following is a 153-amino-acid chain: 3-hydroxyacyl-[acyl-carrier-protein] dehydratase FabZ (153 aa).

The active site involves His57.

The protein belongs to the thioester dehydratase family. FabZ subfamily.

The protein resides in the cytoplasm. The enzyme catalyses a (3R)-hydroxyacyl-[ACP] = a (2E)-enoyl-[ACP] + H2O. In terms of biological role, involved in unsaturated fatty acids biosynthesis. Catalyzes the dehydration of short chain beta-hydroxyacyl-ACPs and long chain saturated and unsaturated beta-hydroxyacyl-ACPs. The protein is 3-hydroxyacyl-[acyl-carrier-protein] dehydratase FabZ of Xanthomonas oryzae pv. oryzae (strain MAFF 311018).